A 512-amino-acid polypeptide reads, in one-letter code: DNA-binding protein (512 aa).

The disordered stretch occupies residues 1–105 (MAGRGGSQLE…QDSEDEREAE (105 aa)). The segment covering 9–21 (LERRRERTPDRGR) has biased composition (basic and acidic residues). Positions 69 to 78 (QEQPPPPQQP) are enriched in pro residues. Over residues 79 to 88 (PKKKPRKTKH) the composition is skewed to basic residues. Over residues 96 to 105 (QDSEDEREAE) the composition is skewed to acidic residues. Phosphotyrosine; by host is present on Y174. Residues C263 and H265 each coordinate Zn(2+). The tract at residues 276 to 310 (IEMDVASENGQRALKENPDRAKVTQNRWGRSVVQL) is flexible loop. Positions 318, 334, 376, 378, 430, and 447 each coordinate Zn(2+). Residues 495–512 (VSLPAGHAETSRQNPFDF) are C-terminal arm, DBP binding.

The protein belongs to the adenoviridae E2A DNA-binding protein family. As to quaternary structure, homomultimerizes on viral ssDNA bound to pTP. Forms a initiation complex with viral polymerase, pTP and hosts NFIA and POU2F1/OCT1. Interacts with host SRCAP.

The protein resides in the host nucleus. Its function is as follows. Plays a role in the elongation phase of viral strand displacement replication by unwinding the template in an ATP-independent fashion, employing its capacity to form multimers. Also enhances the rate of initiation. Released from template upon second strand synthesis. Assembles in complex with viral pTP, viral pol, host NFIA and host POU2F1/OCT1 on viral origin of replication. Covers the whole ssDNA genome during synthesis. The complementary strand synthesis induces its relese from DNA template. May inhibit cellular transcription mediated by the interaction between host SRCAP and CBP. The polypeptide is DNA-binding protein (Homo sapiens (Human)).